Here is a 376-residue protein sequence, read N- to C-terminus: MRDPAPSNSEMKRVIVGMSGGVDSSVSAVLLMEQGYQVEGLFMKNWEEDDGTEYCTAREDLADAQAVCDKIGIKLHTANFAAEYWDNVFEHFLEEYKAGRTPNPDILCNREIKFKAFLDYALMLGADLIATGHYVRRRDIDGRTELLKGLDPNKDQSYFLHAVGGEQIARTLFPVGELEKPEVRAIAEKHGLATAKKKDSTGICFIGERRFTDFLRQYLPAQPGEIKTTEGEVIGRHSGLMYHTIGQRQGLGIGGLKDASDDPWYVLVKDLENNELIVGQGNDHPWLFSRALVSSEIYWVNPIDLSSPRRLTAKVRYRQGDQPCTLEKTADGYRATFDDPQRAVTPGQSVVFYDGEICLGGGVIEIAEPWTTKDKR.

Residues 17–24 (GMSGGVDS) and Met-43 each bind ATP. The interval 103–105 (NPD) is interaction with target base in tRNA. Cys-108 functions as the Nucleophile in the catalytic mechanism. The cysteines at positions 108 and 204 are disulfide-linked. Residue Gly-132 coordinates ATP. The interaction with tRNA stretch occupies residues 154 to 156 (KDQ). Cys-204 functions as the Cysteine persulfide intermediate in the catalytic mechanism. Residues 316–317 (RY) form an interaction with tRNA region.

It belongs to the MnmA/TRMU family.

Its subcellular location is the cytoplasm. The enzyme catalyses S-sulfanyl-L-cysteinyl-[protein] + uridine(34) in tRNA + AH2 + ATP = 2-thiouridine(34) in tRNA + L-cysteinyl-[protein] + A + AMP + diphosphate + H(+). Functionally, catalyzes the 2-thiolation of uridine at the wobble position (U34) of tRNA, leading to the formation of s(2)U34. This is tRNA-specific 2-thiouridylase MnmA from Pseudomonas syringae pv. syringae (strain B728a).